A 144-amino-acid chain; its full sequence is Transcriptional regulator SlyA (144 aa).

Positions 2–135 (ESPLGSDLAR…LIKLIAKLEH (134 aa)) constitute an HTH marR-type domain. A DNA-binding region (H-T-H motif) is located at residues 49–72 (QIQLAKAIGIEQPSLVRTLDQLED).

It belongs to the SlyA family. As to quaternary structure, homodimer.

The protein localises to the cytoplasm. Its function is as follows. Transcription regulator that can specifically activate or repress expression of target genes. Required for virulence and survival in the macrophage environment. Probably activates the transcription of ssrB. Independently of ssrB activation, capable of stimulating the expression of virulence genes found on pathogenicity island 2 (SPI2). Probably activates expression of ispA, xseB genes, and of omp operon. This is Transcriptional regulator SlyA from Salmonella typhimurium (strain LT2 / SGSC1412 / ATCC 700720).